Consider the following 458-residue polypeptide: Argininosuccinate lyase (458 aa).

It belongs to the lyase 1 family. Argininosuccinate lyase subfamily.

Its subcellular location is the cytoplasm. The catalysed reaction is 2-(N(omega)-L-arginino)succinate = fumarate + L-arginine. The protein operates within amino-acid biosynthesis; L-arginine biosynthesis; L-arginine from L-ornithine and carbamoyl phosphate: step 3/3. The polypeptide is Argininosuccinate lyase (Hydrogenobaculum sp. (strain Y04AAS1)).